We begin with the raw amino-acid sequence, 154 residues long: Lipoprotein signal peptidase (154 aa).

The next 3 helical transmembrane spans lie at 8-28, 58-78, and 88-108; these read LYLIVSLLVIIADQLLKNYIV, IFSGQMILFYLISIAAIAVVI, and NGLFDTGLALVLGGIIGNFID. Residues Asp-117 and Asp-133 contribute to the active site. The chain crosses the membrane as a helical span at residues 131–151; the sequence is IADSAITVGIILVFIYLIFIS.

The protein belongs to the peptidase A8 family.

The protein localises to the cell membrane. The enzyme catalyses Release of signal peptides from bacterial membrane prolipoproteins. Hydrolyzes -Xaa-Yaa-Zaa-|-(S,diacylglyceryl)Cys-, in which Xaa is hydrophobic (preferably Leu), and Yaa (Ala or Ser) and Zaa (Gly or Ala) have small, neutral side chains.. It participates in protein modification; lipoprotein biosynthesis (signal peptide cleavage). Its function is as follows. This protein specifically catalyzes the removal of signal peptides from prolipoproteins. This Lactobacillus johnsonii (strain CNCM I-12250 / La1 / NCC 533) protein is Lipoprotein signal peptidase.